A 292-amino-acid chain; its full sequence is NAD kinase (292 aa).

Asp-73 (proton acceptor) is an active-site residue. Residues 73–74 (DG), 147–148 (NE), His-158, Arg-175, Asp-177, 188–193 (TAYSLS), and Gln-247 each bind NAD(+).

The protein belongs to the NAD kinase family. Requires a divalent metal cation as cofactor.

The protein resides in the cytoplasm. It carries out the reaction NAD(+) + ATP = ADP + NADP(+) + H(+). Involved in the regulation of the intracellular balance of NAD and NADP, and is a key enzyme in the biosynthesis of NADP. Catalyzes specifically the phosphorylation on 2'-hydroxyl of the adenosine moiety of NAD to yield NADP. The sequence is that of NAD kinase from Escherichia coli O7:K1 (strain IAI39 / ExPEC).